Consider the following 184-residue polypeptide: Adenine phosphoribosyltransferase (184 aa).

Belongs to the purine/pyrimidine phosphoribosyltransferase family. In terms of assembly, homodimer.

It localises to the cytoplasm. It carries out the reaction AMP + diphosphate = 5-phospho-alpha-D-ribose 1-diphosphate + adenine. It participates in purine metabolism; AMP biosynthesis via salvage pathway; AMP from adenine: step 1/1. In terms of biological role, catalyzes a salvage reaction resulting in the formation of AMP, that is energically less costly than de novo synthesis. This chain is Adenine phosphoribosyltransferase, found in Acidovorax sp. (strain JS42).